The following is a 195-amino-acid chain: Glycerol-3-phosphate acyltransferase (195 aa).

The next 6 membrane-spanning stretches (helical) occupy residues 2–22 (IFFSILITIFAYFLGSISSAI), 54–74 (IAISVILFDILKGAIPMWLGY), 80–100 (PIFLGATAVFSCLGHMYPIFF), 107–127 (GVATAFGVLTTIDLHLSIVMI), 132–152 (LTVLSFGYSSLGAIVTAFIIP), and 155–175 (AWHFQSQYLLPTIIISSLVVI).

This sequence belongs to the PlsY family. As to quaternary structure, probably interacts with PlsX.

The protein resides in the cell inner membrane. The enzyme catalyses an acyl phosphate + sn-glycerol 3-phosphate = a 1-acyl-sn-glycero-3-phosphate + phosphate. The protein operates within lipid metabolism; phospholipid metabolism. Functionally, catalyzes the transfer of an acyl group from acyl-phosphate (acyl-PO(4)) to glycerol-3-phosphate (G3P) to form lysophosphatidic acid (LPA). This enzyme utilizes acyl-phosphate as fatty acyl donor, but not acyl-CoA or acyl-ACP. This chain is Glycerol-3-phosphate acyltransferase, found in Blochmanniella pennsylvanica (strain BPEN).